The following is a 188-amino-acid chain: Elongation factor P (188 aa).

It belongs to the elongation factor P family.

The protein localises to the cytoplasm. Its pathway is protein biosynthesis; polypeptide chain elongation. In terms of biological role, involved in peptide bond synthesis. Stimulates efficient translation and peptide-bond synthesis on native or reconstituted 70S ribosomes in vitro. Probably functions indirectly by altering the affinity of the ribosome for aminoacyl-tRNA, thus increasing their reactivity as acceptors for peptidyl transferase. In Gluconobacter oxydans (strain 621H) (Gluconobacter suboxydans), this protein is Elongation factor P.